A 179-amino-acid chain; its full sequence is Shikimate kinase (179 aa).

15-20 (GAGKTS) lines the ATP pocket. Residue threonine 19 coordinates Mg(2+). Residues aspartate 37, arginine 61, and glycine 83 each contribute to the substrate site. Arginine 122 is an ATP binding site. Arginine 142 provides a ligand contact to substrate.

It belongs to the shikimate kinase family. As to quaternary structure, monomer. The cofactor is Mg(2+).

It localises to the cytoplasm. The catalysed reaction is shikimate + ATP = 3-phosphoshikimate + ADP + H(+). It functions in the pathway metabolic intermediate biosynthesis; chorismate biosynthesis; chorismate from D-erythrose 4-phosphate and phosphoenolpyruvate: step 5/7. Its function is as follows. Catalyzes the specific phosphorylation of the 3-hydroxyl group of shikimic acid using ATP as a cosubstrate. This chain is Shikimate kinase, found in Coxiella burnetii (strain RSA 331 / Henzerling II).